The chain runs to 258 residues: Chymotrypsin-2 (258 aa).

The first 17 residues, 1–17 (MLRKVFAVVSVLLVVSA), serve as a signal peptide directing secretion. Residues 18-32 (AKVTKLVLDDHYVNR) constitute a propeptide, activation peptide. Residues 33 to 255 (VVGGEVAKNG…YHEWVRTTMA (223 aa)) form the Peptidase S1 domain. The cysteines at positions 59 and 75 are disulfide-linked. Residues H74 and D119 each act as charge relay system in the active site. Intrachain disulfides connect C182/C198 and C208/C232. The active-site Charge relay system is S212.

It belongs to the peptidase S1 family. In terms of tissue distribution, after blood feeding, expression is induced in the midgut epithelium, followed by secretion into the midgut lumen.

It is found in the secreted. It carries out the reaction Preferential cleavage: Tyr-|-Xaa, Trp-|-Xaa, Phe-|-Xaa, Leu-|-Xaa.. This chain is Chymotrypsin-2 (CHYM2), found in Anopheles gambiae (African malaria mosquito).